A 155-amino-acid chain; its full sequence is Protein-export protein SecB (155 aa).

Belongs to the SecB family. In terms of assembly, homotetramer, a dimer of dimers. One homotetramer interacts with 1 SecA dimer.

Its subcellular location is the cytoplasm. In terms of biological role, one of the proteins required for the normal export of preproteins out of the cell cytoplasm. It is a molecular chaperone that binds to a subset of precursor proteins, maintaining them in a translocation-competent state. It also specifically binds to its receptor SecA. The chain is Protein-export protein SecB from Vibrio vulnificus (strain CMCP6).